Consider the following 249-residue polypeptide: tRNA (guanine-N(1)-)-methyltransferase (249 aa).

Residues Gly-113 and 132 to 137 each bind S-adenosyl-L-methionine; that span reads VGDFVV.

Belongs to the RNA methyltransferase TrmD family. In terms of assembly, homodimer.

It localises to the cytoplasm. It carries out the reaction guanosine(37) in tRNA + S-adenosyl-L-methionine = N(1)-methylguanosine(37) in tRNA + S-adenosyl-L-homocysteine + H(+). Functionally, specifically methylates guanosine-37 in various tRNAs. The sequence is that of tRNA (guanine-N(1)-)-methyltransferase from Desulforudis audaxviator (strain MP104C).